Here is a 345-residue protein sequence, read N- to C-terminus: Heat-inducible transcription repressor HrcA (345 aa).

Belongs to the HrcA family.

Its function is as follows. Negative regulator of class I heat shock genes (grpE-dnaK-dnaJ and groELS operons). Prevents heat-shock induction of these operons. The protein is Heat-inducible transcription repressor HrcA of Listeria welshimeri serovar 6b (strain ATCC 35897 / DSM 20650 / CCUG 15529 / CIP 8149 / NCTC 11857 / SLCC 5334 / V8).